The sequence spans 529 residues: Peptide chain release factor 3 (529 aa).

The 270-residue stretch at 11–280 (AKRRTFAIIS…GLVEWAPAPM (270 aa)) folds into the tr-type G domain. GTP is bound by residues 20 to 27 (SHPDAGKT), 88 to 92 (DTPGH), and 142 to 145 (NKLD).

It belongs to the TRAFAC class translation factor GTPase superfamily. Classic translation factor GTPase family. PrfC subfamily.

The protein localises to the cytoplasm. Functionally, increases the formation of ribosomal termination complexes and stimulates activities of RF-1 and RF-2. It binds guanine nucleotides and has strong preference for UGA stop codons. It may interact directly with the ribosome. The stimulation of RF-1 and RF-2 is significantly reduced by GTP and GDP, but not by GMP. The chain is Peptide chain release factor 3 from Shigella flexneri serotype 5b (strain 8401).